We begin with the raw amino-acid sequence, 363 residues long: Exopolygalacturonase rpg13 (363 aa).

The first 26 residues, 1–26 (MVKFLSLTSSVTALLLLSLGANGVAA), serve as a signal peptide directing secretion. Asn121, Asn142, and Asn150 each carry an N-linked (GlcNAc...) asparagine glycan. PbH1 repeat units lie at residues 143-173 (ATDV…DVSR), 174-195 (SSNV…AINE), 197-217 (VTNV…SVGS), 227-248 (VKTV…RIKT), and 256-277 (VSDI…LITT). Residue Asp188 is the Proton donor of the active site. Cys190 and Cys207 are disulfide-bonded. N-linked (GlcNAc...) asparagine glycosylation occurs at Asn199. His211 is an active-site residue. Residue Asn321 is glycosylated (N-linked (GlcNAc...) asparagine). The cysteines at positions 322 and 328 are disulfide-linked. One copy of the PbH1 6 repeat lies at 328–354 (CTDFTLSGVKITKASNTPKNVCVNLDG).

This sequence belongs to the glycosyl hydrolase 28 family. Post-translationally, N-glycosylated.

The protein localises to the secreted. The enzyme catalyses [(1-&gt;4)-alpha-D-galacturonosyl](n) + H2O = alpha-D-galacturonate + [(1-&gt;4)-alpha-D-galacturonosyl](n-1). Specific in hydrolyzing the terminal glycosidic bond of polygalacturonic acid and oligogalacturonates. Has no activity towards trigalacturonic acid. The polypeptide is Exopolygalacturonase rpg13 (Rhizopus delemar (strain RA 99-880 / ATCC MYA-4621 / FGSC 9543 / NRRL 43880) (Mucormycosis agent)).